The following is a 588-amino-acid chain: Myc box-dependent-interacting protein 1 (588 aa).

At alanine 2 the chain carries N-acetylalanine. The interval 2-122 (AEMGSKGVTA…DYHQKLVDQA (121 aa)) is interaction with BIN2. Coiled-coil stretches lie at residues 15-42 (ASNV…TKDE) and 193-274 (HLVA…EKQH). In terms of domain architecture, BAR spans 29–276 (VLQKLGKADE…LVSLEKQHGS (248 aa)). The segment at 279 to 355 (FTVKAQPSDN…PKHTPSKEMK (77 aa)) is disordered. A phosphoserine mark is found at serine 296, serine 298, and serine 304. Phosphothreonine is present on threonine 308. Residues serine 324 and serine 332 each carry the phosphoserine modification. Positions 379-422 (FEAPGPFSEQASLLDLDFEPLPPVASPVKAPTPSGQSIPWDLWE) are clathrin-binding. The tract at residues 448 to 484 (PSQTAEPGPAQPAEASEVVGGAQEPGETAASEATSSS) is disordered. Low complexity predominate over residues 474-484 (ETAASEATSSS). The SH3 domain occupies 515-588 (GFMFKVQAQH…FPENFTERVQ (74 aa)).

Heterodimer with AMPH. Binds SH3GLB1. Interacts (via SH3 domain) with DNM1. Interacts with SYNJ1. Interacts (via SH3 domain) with DNM2. Interacts with CLTC. Interacts with AP2A2. Interacts with AP2B1. Interacts with MYC (via N-terminal transactivation domain); the interaction requires the integrity of the conserved MYC box regions 1 and 2. Interacts with BIN2. Interacts with SNX4. Interacts (via BAR domain) with BACE1. Binds (via BAR domain) F-actin. Phosphorylated by protein kinase C. Isoform 1 is expressed mainly in the brain. Isoform 2 is widely expressed.

It localises to the nucleus. The protein resides in the cytoplasm. Its subcellular location is the endosome. It is found in the cell membrane. The protein localises to the sarcolemma. It localises to the T-tubule. Is a key player in the control of plasma membrane curvature, and membrane shaping and remodeling. Required in muscle cells for the formation of T-tubules, tubular invaginations of the plasma membrane that function in depolarization-contraction coupling. Required in muscle cells for the formation of T-tubules, tubular invaginations of the plasma membrane that function in depolarization-contraction coupling. Is a negative regulator of endocytosis. Is also involved in the regulation of intracellular vesicles sorting, modulation of BACE1 trafficking and the control of amyloid-beta production. In neuronal circuits, endocytosis regulation may influence the internalization of PHF-tau aggregates. May be involved in the regulation of MYC activity and the control cell proliferation. The polypeptide is Myc box-dependent-interacting protein 1 (Bin1) (Mus musculus (Mouse)).